Here is a 326-residue protein sequence, read N- to C-terminus: tRNA uridine(34) hydroxylase (326 aa).

The region spanning 123–217 (ADPEVFVVDT…YLEEVPQEES (95 aa)) is the Rhodanese domain. Cys177 serves as the catalytic Cysteine persulfide intermediate. Residues 278–288 (QVERFREREKQ) are compositionally biased toward basic and acidic residues. A disordered region spans residues 278 to 326 (QVERFREREKQVSLANQRGEQHVGGESAKQRAQRREAKLAKKAAQRKQA). The span at 317 to 326 (AKKAAQRKQA) shows a compositional bias: basic residues.

This sequence belongs to the TrhO family.

The catalysed reaction is uridine(34) in tRNA + AH2 + O2 = 5-hydroxyuridine(34) in tRNA + A + H2O. In terms of biological role, catalyzes oxygen-dependent 5-hydroxyuridine (ho5U) modification at position 34 in tRNAs. The protein is tRNA uridine(34) hydroxylase of Vibrio parahaemolyticus serotype O3:K6 (strain RIMD 2210633).